A 254-amino-acid polypeptide reads, in one-letter code: Segregation and condensation protein A (254 aa).

This sequence belongs to the ScpA family. In terms of assembly, component of a cohesin-like complex composed of ScpA, ScpB and the Smc homodimer, in which ScpA and ScpB bind to the head domain of Smc. The presence of the three proteins is required for the association of the complex with DNA.

It is found in the cytoplasm. In terms of biological role, participates in chromosomal partition during cell division. May act via the formation of a condensin-like complex containing Smc and ScpB that pull DNA away from mid-cell into both cell halves. This is Segregation and condensation protein A from Brevibacillus brevis (strain 47 / JCM 6285 / NBRC 100599).